Here is a 352-residue protein sequence, read N- to C-terminus: Uroporphyrinogen decarboxylase (352 aa).

Substrate-binding positions include 26–30 (RQAGR), F45, D76, Y153, S208, and H323.

The protein belongs to the uroporphyrinogen decarboxylase family. Homodimer.

The protein resides in the cytoplasm. It carries out the reaction uroporphyrinogen III + 4 H(+) = coproporphyrinogen III + 4 CO2. The protein operates within porphyrin-containing compound metabolism; protoporphyrin-IX biosynthesis; coproporphyrinogen-III from 5-aminolevulinate: step 4/4. Its function is as follows. Catalyzes the decarboxylation of four acetate groups of uroporphyrinogen-III to yield coproporphyrinogen-III. In Prochlorococcus marinus (strain MIT 9313), this protein is Uroporphyrinogen decarboxylase.